A 474-amino-acid chain; its full sequence is tRNA-2-methylthio-N(6)-dimethylallyladenosine synthase (474 aa).

The 118-residue stretch at 3 to 120 (KKLHIKTWGC…LPEMIEQVRR (118 aa)) folds into the MTTase N-terminal domain. [4Fe-4S] cluster-binding residues include C12, C49, C83, C157, C161, and C164. In terms of domain architecture, Radical SAM core spans 143–375 (RAEGPTAFVS…QDRITQQAMR (233 aa)). The 64-residue stretch at 378–441 (RHMMGTVQRI…TNSLRGVFIR (64 aa)) folds into the TRAM domain.

The protein belongs to the methylthiotransferase family. MiaB subfamily. In terms of assembly, monomer. The cofactor is [4Fe-4S] cluster.

The protein resides in the cytoplasm. It carries out the reaction N(6)-dimethylallyladenosine(37) in tRNA + (sulfur carrier)-SH + AH2 + 2 S-adenosyl-L-methionine = 2-methylsulfanyl-N(6)-dimethylallyladenosine(37) in tRNA + (sulfur carrier)-H + 5'-deoxyadenosine + L-methionine + A + S-adenosyl-L-homocysteine + 2 H(+). Functionally, catalyzes the methylthiolation of N6-(dimethylallyl)adenosine (i(6)A), leading to the formation of 2-methylthio-N6-(dimethylallyl)adenosine (ms(2)i(6)A) at position 37 in tRNAs that read codons beginning with uridine. The polypeptide is tRNA-2-methylthio-N(6)-dimethylallyladenosine synthase (Shewanella baltica (strain OS185)).